The following is a 439-amino-acid chain: MNLTPKEIVKFLDDYVIGQKKAKKIIAIALRNRYRRMQLSPELQDDIVPKNILMIGSTGVGKTEIARRLAKMMGFPFIKIEASKYTEVGFVGRDVESMVRDLANAALNLVKNEQREKNKDKIDEFIENKILEKLLPPLPKGISDEKQEEYKNSLEKMRTKLRNGNLDESTIEIEISQNMFDTNPNLPPEMGAMQDIVKVIGVGSKKVKKEMKIKDAKNALKNEAGEKILDQESIKSEALKRAENEGIIFIDEIDKIAVSSGNSNRQDPSKEGVQRDLLPIVEGSNVQTKIGTLKTDHILFIAAGAFHLSKPSDLIPELQGRFPLRVELDSLDDKALYEILTRPKNSLLKQYSQLLKTENLELEFNDEAIKEIAKIASRANEEMQDIGARRLHTVIEKLLEDLSFEADEYAGKKFVVDKKMVEEKLGDIIENKDLARYIL.

ATP contacts are provided by residues I17, 59 to 64, D251, E317, and R389; that span reads GVGKTE.

The protein belongs to the ClpX chaperone family. HslU subfamily. In terms of assembly, a double ring-shaped homohexamer of HslV is capped on each side by a ring-shaped HslU homohexamer. The assembly of the HslU/HslV complex is dependent on binding of ATP.

The protein resides in the cytoplasm. In terms of biological role, ATPase subunit of a proteasome-like degradation complex; this subunit has chaperone activity. The binding of ATP and its subsequent hydrolysis by HslU are essential for unfolding of protein substrates subsequently hydrolyzed by HslV. HslU recognizes the N-terminal part of its protein substrates and unfolds these before they are guided to HslV for hydrolysis. The polypeptide is ATP-dependent protease ATPase subunit HslU (Campylobacter jejuni (strain RM1221)).